We begin with the raw amino-acid sequence, 440 residues long: Thymidine phosphorylase (440 aa).

Belongs to the thymidine/pyrimidine-nucleoside phosphorylase family. In terms of assembly, homodimer.

The enzyme catalyses thymidine + phosphate = 2-deoxy-alpha-D-ribose 1-phosphate + thymine. Its pathway is pyrimidine metabolism; dTMP biosynthesis via salvage pathway; dTMP from thymine: step 1/2. Its function is as follows. The enzymes which catalyze the reversible phosphorolysis of pyrimidine nucleosides are involved in the degradation of these compounds and in their utilization as carbon and energy sources, or in the rescue of pyrimidine bases for nucleotide synthesis. The protein is Thymidine phosphorylase of Salmonella agona (strain SL483).